A 100-amino-acid polypeptide reads, in one-letter code: A-type ATP synthase subunit F (100 aa).

It belongs to the V-ATPase F subunit family. Has multiple subunits with at least A(3), B(3), C, D, E, F, H, I and proteolipid K(x).

Its subcellular location is the cell membrane. In terms of biological role, component of the A-type ATP synthase that produces ATP from ADP in the presence of a proton gradient across the membrane. This chain is A-type ATP synthase subunit F, found in Methanocorpusculum labreanum (strain ATCC 43576 / DSM 4855 / Z).